The sequence spans 324 residues: Aspartate carbamoyltransferase catalytic subunit (324 aa).

The carbamoyl phosphate site is built by arginine 71 and threonine 72. Lysine 99 contributes to the L-aspartate binding site. 3 residues coordinate carbamoyl phosphate: arginine 121, histidine 151, and glutamine 154. L-aspartate is bound by residues arginine 184 and arginine 239. Glycine 280 and proline 281 together coordinate carbamoyl phosphate.

It belongs to the aspartate/ornithine carbamoyltransferase superfamily. ATCase family. In terms of assembly, heterododecamer (2C3:3R2) of six catalytic PyrB chains organized as two trimers (C3), and six regulatory PyrI chains organized as three dimers (R2).

It carries out the reaction carbamoyl phosphate + L-aspartate = N-carbamoyl-L-aspartate + phosphate + H(+). It participates in pyrimidine metabolism; UMP biosynthesis via de novo pathway; (S)-dihydroorotate from bicarbonate: step 2/3. Catalyzes the condensation of carbamoyl phosphate and aspartate to form carbamoyl aspartate and inorganic phosphate, the committed step in the de novo pyrimidine nucleotide biosynthesis pathway. In Cupriavidus necator (strain ATCC 17699 / DSM 428 / KCTC 22496 / NCIMB 10442 / H16 / Stanier 337) (Ralstonia eutropha), this protein is Aspartate carbamoyltransferase catalytic subunit.